A 201-amino-acid chain; its full sequence is MCAARLVAAAAQSVYSFSARPLAGGEPVSLGSLRGKVLLIENVASLUGTTVRDYTQMNELQRRLGPRGLVVLGFPCNQFGHQENAKNEEILNSLKYVRPGGGFEPNFMLFEKCEVNGAGAHPLFAFLREALPAPSDDATALMTDPKLITWSPVCRNDVAWNFEKFLVGPDGVPLRRYSRRFQTIDIEPDIEALLSQGPSCA.

The residue at position 32 (serine 32) is a Phosphoserine. Selenocysteine 47 is an active-site residue. Selenocysteine 47 is a non-standard amino acid (selenocysteine). Residues lysine 86, lysine 112, and lysine 146 each carry the N6-acetyllysine; alternate modification. N6-succinyllysine; alternate occurs at positions 86, 112, and 146. A phosphoserine mark is found at serine 195 and serine 199.

The protein belongs to the glutathione peroxidase family. Homotetramer. Interacts with MIEN1. During periods of oxidative stress, Sec-47 may react with a superoxide radical, irreversibly lose hydroselenide and be converted to dehydroalanine.

It is found in the cytoplasm. The protein resides in the mitochondrion. It carries out the reaction 2 glutathione + H2O2 = glutathione disulfide + 2 H2O. It catalyses the reaction a hydroperoxy polyunsaturated fatty acid + 2 glutathione = a hydroxy polyunsaturated fatty acid + glutathione disulfide + H2O. The enzyme catalyses tert-butyl hydroperoxide + 2 glutathione = tert-butanol + glutathione disulfide + H2O. The catalysed reaction is cumene hydroperoxide + 2 glutathione = 2-phenylpropan-2-ol + glutathione disulfide + H2O. It carries out the reaction (13S)-hydroperoxy-(9Z,11E)-octadecadienoate + 2 glutathione = (13S)-hydroxy-(9Z,11E)-octadecadienoate + glutathione disulfide + H2O. It catalyses the reaction (9S)-hydroperoxy-(10E,12Z)-octadecadienoate + 2 glutathione = (9S)-hydroxy-(10E,12Z)-octadecadienoate + glutathione disulfide + H2O. The enzyme catalyses (5S)-hydroperoxy-(6E,8Z,11Z,14Z)-eicosatetraenoate + 2 glutathione = (5S)-hydroxy-(6E,8Z,11Z,14Z)-eicosatetraenoate + glutathione disulfide + H2O. The catalysed reaction is (12S)-hydroperoxy-(5Z,8Z,10E,14Z)-eicosatetraenoate + 2 glutathione = (12S)-hydroxy-(5Z,8Z,10E,14Z)-eicosatetraenoate + glutathione disulfide + H2O. It carries out the reaction (12R)-hydroperoxy-(5Z,8Z,10E,14Z)-eicosatetraenoate + 2 glutathione = (12R)-hydroxy-(5Z,8Z,10E,14Z)-eicosatetraenoate + glutathione disulfide + H2O. It catalyses the reaction (15S)-hydroperoxy-(5Z,8Z,11Z,13E)-eicosatetraenoate + 2 glutathione = (15S)-hydroxy-(5Z,8Z,11Z,13E)-eicosatetraenoate + glutathione disulfide + H2O. The enzyme catalyses (5S)-hydroperoxy-(6E,8Z,11Z,14Z,17Z)-eicosapentaenoate + 2 glutathione = (5S)-hydroxy-(6E,8Z,11Z,14Z,17Z)-eicosapentaenoate + glutathione disulfide + H2O. The catalysed reaction is (12S)-hydroperoxy-(5Z,8Z,10E,14Z,17Z)-eicosapentaenoate + 2 glutathione = (12S)-hydroxy-(5Z,8Z,10E,14Z,17Z)-eicosapentaenoate + glutathione disulfide + H2O. It carries out the reaction (15S)-hydroperoxy-(5Z,8Z,11Z,13E,17Z)-eicosapentaenoate + 2 glutathione = (15S)-hydroxy-(5Z,8Z,11Z,13E,17Z)-eicosapentaenoate + glutathione disulfide + H2O. It catalyses the reaction (15S)-hydroperoxy-(11Z,13E)-eicosadienoate + 2 glutathione = (15S)-hydroxy-(11Z,13E)-eicosadienoate + glutathione disulfide + H2O. The enzyme catalyses (17S)-hydroperoxy-(4Z,7Z,10Z,13Z,15E,19Z)-docosahexaenoate + 2 glutathione = (17S)-hydroxy-(4Z,7Z,10Z,13Z,15E,19Z)-docosahexaenoate + glutathione disulfide + H2O. Its function is as follows. Catalyzes the reduction of hydroperoxides in a glutathione-dependent manner thus regulating cellular redox homeostasis. Can reduce small soluble hydroperoxides such as H2O2, cumene hydroperoxide and tert-butyl hydroperoxide, as well as several fatty acid-derived hydroperoxides. In platelets catalyzes the reduction of 12-hydroperoxyeicosatetraenoic acid, the primary product of the arachidonate 12-lipoxygenase pathway. This is Glutathione peroxidase 1 (GPX1) from Pongo pygmaeus (Bornean orangutan).